The chain runs to 763 residues: MNDSQNCLRQREENSHLNPGNDFGHHQGAECTINHNNMPHRNAYTESTNDTEAKSIVMCDDPNAYQISYTNNEPAGDGAIETTSILLSQPLPLRSNVMSVLVGIFVAVGGFLFGYDTGLINSITDMPYVKTYIAPNHSYFTTSQIAILVSFLSLGTFFGALIAPYISDSYGRKPTIMFSTAVIFSIGNSLQVASGGLVLLIVGRVISGIGIGIISAVVPLYQAEAAQKNLRGAIISSYQWAITIGLLVSSAVSQGTHSKNGPSSYRIPIGLQYVWSSILAVGMIFLPESPRYYVLKDELNKAAKSLSFLRGLPIEDPRLLEELVEIKATYDYEASFGPSTLLDCFKTSENRPKQILRIFTGIAIQAFQQASGINFIFYYGVNFFNNTGVDNSYLVSFISYAVNVAFSIPGMYLVDRIGRRPVLLAGGVIMAIANLVIAIVGVSEGKTVVASKIMIAFICLFIAAFSATWGGVVWVVSAELYPLGVRSKCTAICAAANWLVNFTCALITPYIVDVGSHTSSMGPKIFFIWGGLNVVAVIVVYFAVYETRGLTLEEIDELFRKAPNSVISSKWNKKIRKRCLAFPISQQIEMKTNIKNAGKLDNNNSPIVQDDSHNIIDVDGFLENQIQSNDHMIAADKGSGSLVNIIDTAPLTSTEFKPVEHPPVNYVDLGNGLGLNTYNRGPPSIISDSTDEFYEENDSSYYNNNTERNGANSVNTYMAQLINSSSTTSNDTSFSPSHNSNARTSSNWTSDLASKHSQYTSPQ.

The disordered stretch occupies residues 1–28 (MNDSQNCLRQREENSHLNPGNDFGHHQG). Residues 1-99 (MNDSQNCLRQ…PLPLRSNVMS (99 aa)) lie on the Cytoplasmic side of the membrane. Residues 100 to 120 (VLVGIFVAVGGFLFGYDTGLI) traverse the membrane as a helical segment. Over 121 to 144 (NSITDMPYVKTYIAPNHSYFTTSQ) the chain is Extracellular. N-linked (GlcNAc...) asparagine glycosylation is present at N136. Residues 145-165 (IAILVSFLSLGTFFGALIAPY) form a helical membrane-spanning segment. At 166 to 175 (ISDSYGRKPT) the chain is on the cytoplasmic side. A helical transmembrane segment spans residues 176 to 196 (IMFSTAVIFSIGNSLQVASGG). Position 197 (L197) is a topological domain, extracellular. A helical transmembrane segment spans residues 198–218 (VLLIVGRVISGIGIGIISAVV). Over 219–231 (PLYQAEAAQKNLR) the chain is Cytoplasmic. A helical transmembrane segment spans residues 232–252 (GAIISSYQWAITIGLLVSSAV). The Extracellular portion of the chain corresponds to 253 to 266 (SQGTHSKNGPSSYR). Residues 267-287 (IPIGLQYVWSSILAVGMIFLP) traverse the membrane as a helical segment. The Cytoplasmic segment spans residues 288 to 357 (ESPRYYVLKD…SENRPKQILR (70 aa)). The helical transmembrane segment at 358 to 378 (IFTGIAIQAFQQASGINFIFY) threads the bilayer. Residues 379–393 (YGVNFFNNTGVDNSY) lie on the Extracellular side of the membrane. The N-linked (GlcNAc...) asparagine glycan is linked to N385. The chain crosses the membrane as a helical span at residues 394–414 (LVSFISYAVNVAFSIPGMYLV). Residues 415-421 (DRIGRRP) lie on the Cytoplasmic side of the membrane. Residues 422–442 (VLLAGGVIMAIANLVIAIVGV) traverse the membrane as a helical segment. Topologically, residues 443-452 (SEGKTVVASK) are extracellular. The chain crosses the membrane as a helical span at residues 453–473 (IMIAFICLFIAAFSATWGGVV). Over 474–491 (WVVSAELYPLGVRSKCTA) the chain is Cytoplasmic. The chain crosses the membrane as a helical span at residues 492–512 (ICAAANWLVNFTCALITPYIV). Over 513-524 (DVGSHTSSMGPK) the chain is Extracellular. A helical membrane pass occupies residues 525 to 545 (IFFIWGGLNVVAVIVVYFAVY). Over 546–763 (ETRGLTLEEI…SKHSQYTSPQ (218 aa)) the chain is Cytoplasmic. Residues 725 to 737 (SSTTSNDTSFSPS) are compositionally biased toward low complexity. The segment at 725-763 (SSTTSNDTSFSPSHNSNARTSSNWTSDLASKHSQYTSPQ) is disordered. Over residues 738-763 (HNSNARTSSNWTSDLASKHSQYTSPQ) the composition is skewed to polar residues.

It belongs to the major facilitator superfamily. Sugar transporter (TC 2.A.1.1) family. As to quaternary structure, interacts with YCK1. Interacts with MTH1 and STD1. In terms of processing, phosphorylated in the C-terminal tail on Yck consensus sites in a yeast casein kinases YCK1 and YCK2 (Yck)-dependent manner. This phosphorylation is required for interaction with HXT corepressors MTH1 and STD1 and ultimately HXT expression.

It localises to the cell membrane. In terms of biological role, low-affinity high glucose sensor that is part of the sensor/receptor-repressor (SSR) glucose-signaling pathway, which detects extracellular glucose and induces expression of glucose transporters that bring glucose into the cell. The transporter-like sensor generates an intracellular signal in the presence of high levels of glucose to promote high glucose-induced expression of HXT1. Binding of glucose to the RGT2 transmembrane domain activates a downstream signaling cascade, leading to phosphorylation of the RGT1 corepressors MTH1 and STD1, targeting them for SCF(Grr1)-dependent ubiquitination and degradation. Depletion of the corepressors robs RGT1 of its ability to repress expression of HXT genes, leading to accumulation of glucose transporters in the plasma membrane. Even though RGT2 is similar to glucose transporters, it appears to be unable to transport glucose. In Saccharomyces cerevisiae (strain ATCC 204508 / S288c) (Baker's yeast), this protein is High glucose sensor RGT2.